The following is a 479-amino-acid chain: Glycogen synthase (479 aa).

Residue Lys-15 participates in ADP-alpha-D-glucose binding.

It belongs to the glycosyltransferase 1 family. Bacterial/plant glycogen synthase subfamily.

It catalyses the reaction [(1-&gt;4)-alpha-D-glucosyl](n) + ADP-alpha-D-glucose = [(1-&gt;4)-alpha-D-glucosyl](n+1) + ADP + H(+). Its pathway is glycan biosynthesis; glycogen biosynthesis. Synthesizes alpha-1,4-glucan chains using ADP-glucose. The sequence is that of Glycogen synthase from Clostridium novyi (strain NT).